The following is a 1025-amino-acid chain: Putative receptor-like protein kinase At3g47110 (1025 aa).

The N-terminal stretch at 1–30 (MGVPCIVMRLILVSALLVSVSLEHSDMVCA) is a signal peptide. Residues 31-653 (QTIRLTEETD…LPRRHSSVRK (623 aa)) are Extracellular-facing. N-linked (GlcNAc...) asparagine glycans are attached at residues asparagine 63 and asparagine 103. LRR repeat units follow at residues 104–128 (LSFL…VGNL), 130–151 (RLQY…VLSN), 152–175 (CSSL…EFGS), 176–200 (LSKL…LGNL), 202–224 (SLQM…IARL), 226–248 (QMIF…IYNL), 249–271 (SSLI…DFGS), 273–297 (LPNL…LSNI), 298–323 (SSLR…RLQN), and 325–344 (LLLG…DLDF). N-linked (GlcNAc...) asparagine glycans are attached at residues asparagine 135 and asparagine 151. Asparagine 188 and asparagine 199 each carry an N-linked (GlcNAc...) asparagine glycan. Asparagine 247 is a glycosylation site (N-linked (GlcNAc...) asparagine). An N-linked (GlcNAc...) asparagine glycan is attached at asparagine 296. 4 N-linked (GlcNAc...) asparagine glycosylation sites follow: asparagine 331, asparagine 336, asparagine 350, and asparagine 374. LRR repeat units lie at residues 351–374 (CSQL…FIAN), 376–400 (STQL…IGNL), 401–424 (VSLQ…LGEL), 426–448 (ELRK…LGNI), 449–472 (SGLT…LGSC), 473–496 (SYLL…LMEL), 498–520 (SLVV…IGKL), 521–544 (KFLL…LANC), 546–567 (SLEF…IRGL), 568–593 (TGLR…NFSK), and 595–616 (QNLN…VFRN). Residues asparagine 447, asparagine 458, asparagine 486, and asparagine 503 are each glycosylated (N-linked (GlcNAc...) asparagine). Asparagine 579, asparagine 590, asparagine 598, and asparagine 616 each carry an N-linked (GlcNAc...) asparagine glycan. A helical transmembrane segment spans residues 654–674 (IITICVSAVMAALLLLCLCVV). The Cytoplasmic portion of the chain corresponds to 675–1025 (YLCWYKLRVK…RESFFRDEET (351 aa)). Residue threonine 716 is modified to Phosphothreonine. The Protein kinase domain occupies 719 to 1020 (FSSSNLIGSG…KLVSIRESFF (302 aa)). Residues 725–733 (IGSGNFGAV) and lysine 748 each bind ATP. Residues tyrosine 798 and tyrosine 843 each carry the phosphotyrosine modification. The active-site Proton acceptor is aspartate 856. Tyrosine 904 carries the phosphotyrosine modification.

It belongs to the protein kinase superfamily. Ser/Thr protein kinase family.

It localises to the cell membrane. The enzyme catalyses L-seryl-[protein] + ATP = O-phospho-L-seryl-[protein] + ADP + H(+). It carries out the reaction L-threonyl-[protein] + ATP = O-phospho-L-threonyl-[protein] + ADP + H(+). The sequence is that of Putative receptor-like protein kinase At3g47110 from Arabidopsis thaliana (Mouse-ear cress).